The sequence spans 631 residues: DNA ligase (631 aa).

NAD(+) is bound by residues 37-41 (DAHYD) and 79-80 (ST). Lysine 115 (N6-AMP-lysine intermediate) is an active-site residue. Arginine 131, glutamate 160, and lysine 272 together coordinate NAD(+). Residues cysteine 361, cysteine 364, cysteine 377, and cysteine 382 each contribute to the Zn(2+) site. The 92-residue stretch at 539-630 (DVSSPISGKG…SQSSPEQMSL (92 aa)) folds into the BRCT domain.

It belongs to the NAD-dependent DNA ligase family. LigA subfamily. It depends on Mg(2+) as a cofactor. Requires Mn(2+) as cofactor.

The catalysed reaction is NAD(+) + (deoxyribonucleotide)n-3'-hydroxyl + 5'-phospho-(deoxyribonucleotide)m = (deoxyribonucleotide)n+m + AMP + beta-nicotinamide D-nucleotide.. Its function is as follows. DNA ligase that catalyzes the formation of phosphodiester linkages between 5'-phosphoryl and 3'-hydroxyl groups in double-stranded DNA using NAD as a coenzyme and as the energy source for the reaction. It is essential for DNA replication and repair of damaged DNA. The protein is DNA ligase of Desulfatibacillum aliphaticivorans.